The chain runs to 123 residues: Anti-lipopolysaccharide factor (123 aa).

The N-terminal stretch at 1–26 (MRKGVVAGLCLALVVMCLYLPQPCEA) is a signal peptide. A glycan (N-linked (GlcNAc...) asparagine) is linked at Asn-45. Cys-55 and Cys-76 are oxidised to a cystine.

As to expression, isoform 1 is highly expressed in muscle and stomach, moderately in heart and gill and at lower levels in hemocytes and hepatopancreas. Isoform 2 is mainly expressed in gill, hepatopancreas, muscle and eyestalk.

It localises to the secreted. Functionally, may bind to bacterial LPS and thus specifically inhibit the LPS-mediated activation of the hemolymph coagulation. It has a strong antibacterial effect especially on the growth of Gram-negative bacteria. The chain is Anti-lipopolysaccharide factor from Portunus trituberculatus (Swimming crab).